A 321-amino-acid chain; its full sequence is Olfactory receptor 5K3 (321 aa).

Over 1–25 (MNKENHSLIAEFILTGFTYHPKLKT) the chain is Extracellular. Residue N5 is glycosylated (N-linked (GlcNAc...) asparagine). A helical transmembrane segment spans residues 26-46 (VLFVVFFAIYLITMVGNIGLV). Residues 47 to 56 (ALIYIEQRLH) lie on the Cytoplasmic side of the membrane. A helical membrane pass occupies residues 57–77 (TPMYIFLGNLVLMDSCCSSAI). Topologically, residues 78-97 (TPKMLENFFSEDKRITLYEC) are extracellular. A disulfide bridge links C97 with C179. A helical transmembrane segment spans residues 98-118 (MAQFYFLCLAETTDCFLLAAM). At 119 to 143 (AYDCYVAICNPLQYHTMMSKTLCIQ) the chain is on the cytoplasmic side. Residues 144-164 (MTAGAYLAGNLHPMIEVEFLL) form a helical membrane-spanning segment. Residues 165–196 (RLTFCGSHQINHFFCDVLPLYRLSCINPYINE) lie on the Extracellular side of the membrane. Residues 197–217 (LVLFILAGSIQIFTIVLVSYF) traverse the membrane as a helical segment. Residues 218-235 (YILFTIFTMKSKEGRGKA) lie on the Cytoplasmic side of the membrane. Residues 236–256 (LSTCASHFLSVSIFCDSLLFM) form a helical membrane-spanning segment. Topologically, residues 257–269 (YARPGAVNEGDKD) are extracellular. Residues 270 to 290 (IPVAIFYTLVIPLLNPFIYSL) form a helical membrane-spanning segment. Over 291-321 (RNKEVINIMKKIMKKRKFCHILKQMSSPLAT) the chain is Cytoplasmic.

The protein belongs to the G-protein coupled receptor 1 family.

It localises to the cell membrane. Functionally, odorant receptor. This chain is Olfactory receptor 5K3 (OR5K3), found in Homo sapiens (Human).